Consider the following 398-residue polypeptide: uncharacterized protein (398 aa).

The N-terminal stretch at 1–21 (MRKVGITLSVVALVIMGFVAG) is a signal peptide. Cys22 carries the post-translational modification N-acetylcysteine. Cys22 carries S-archaeol cysteine lipidation.

The protein belongs to the BMP lipoprotein family.

It is found in the cell membrane. This is an uncharacterized protein from Pyrococcus furiosus (strain ATCC 43587 / DSM 3638 / JCM 8422 / Vc1).